The chain runs to 318 residues: MLLQRFFTRALHSTRQLYAGSGGSGGLEKSALAALRKKTGYTFANCKKALEKHNNDVGLAEKWLHEQAQTLGWSKATKVADRATAHGLIGVLIRGNRGAMVELNCETDFVARNDTFKRFVDHVACMCLQYTDLTDFDGDLWKLGFDADALRNLRTEEGRTLGDHLALLIGAIGENATIRRALCFKANNDLKLVGYAHPAPTNVGTTEGITQVGKYGAIVAYRSTHPLLDFEFHKSICQQIVGMKPTKIGEYDKDKPAENKDDETCLIHQEYLLDADKTVGEALQEHNCEIVDYHRFECGEHTERSLEAIIRSQHQSSN.

A mitochondrion-targeting transit peptide spans M1–Y18.

It belongs to the EF-Ts family.

Its subcellular location is the mitochondrion. In terms of biological role, associates with the EF-Tu.GDP complex and induces the exchange of GDP to GTP. It remains bound to the aminoacyl-tRNA.EF-Tu.GTP complex up to the GTP hydrolysis stage on the ribosome. The chain is Elongation factor Ts, mitochondrial from Drosophila melanogaster (Fruit fly).